We begin with the raw amino-acid sequence, 899 residues long: Calcium-transporting ATPase 1 (899 aa).

Transmembrane regions (helical) follow at residues 59–79 (FVKD…VTLG), 80–100 (NIDD…VGFV), 247–267 (QLSL…FFQG), and 282–302 (VAAI…LGVL). The active-site 4-aspartylphosphate intermediate is Asp-329. 4 helical membrane-spanning segments follow: residues 688–708 (FQLS…VFGF), 757–777 (QLLQ…IVVF), 827–847 (FNIA…ASPF), and 854–874 (EAIG…VLWV). Ser-892 is modified (phosphoserine).

This sequence belongs to the cation transport ATPase (P-type) (TC 3.A.3) family.

The protein resides in the endoplasmic reticulum membrane. The catalysed reaction is Ca(2+)(in) + ATP + H2O = Ca(2+)(out) + ADP + phosphate + H(+). Functionally, transports calcium and manganese ions into the cell. Regulates cell morphogenesis through control of manganese and calcium homeostasis. This is Calcium-transporting ATPase 1 (pmr1) from Schizosaccharomyces pombe (strain 972 / ATCC 24843) (Fission yeast).